A 183-amino-acid polypeptide reads, in one-letter code: NEDD8-conjugating enzyme Ubc12 (183 aa).

Met1 carries the post-translational modification N-acetylmethionine. Residues 1–29 (MIKLFSLKQQKKEEESAGGTKGSSKKASA) are disordered. The interaction with UBA3 stretch occupies residues 1 to 57 (MIKLFSLKQQKKEEESAGGTKGSSKKASAAQLRIQKDINELNLPKTCDISFSDPDDL). An N6-acetyllysine modification is found at Lys3. The UBC core domain occupies 29–173 (AAQLRIQKDI…VQRSMRGGYI (145 aa)). Position 50 is a phosphoserine (Ser50). Cys111 acts as the Glycyl thioester intermediate in catalysis. Position 169 is an asymmetric dimethylarginine; alternate (Arg169). At Arg169 the chain carries Omega-N-methylarginine; alternate.

The protein belongs to the ubiquitin-conjugating enzyme family. UBC12 subfamily. Interacts with UBA3 and RBX1. Interacts (N-terminally acetylated form) with (via DCUN1 domain) DCUN1D1, DCUN1D2, DCUN1D3, DCUN1D4 and DCUN1D5. Post-translationally, the acetylation of Met-1 increases affinity for DCUN1D1 by about 2 orders of magnitude and is crucial for NEDD8 transfer to cullins.

The catalysed reaction is [E1 NEDD8-activating enzyme]-S-[NEDD8 protein]-yl-L-cysteine + [E2 NEDD8-conjugating enzyme]-L-cysteine = [E1 NEDD8-activating enzyme]-L-cysteine + [E2 NEDD8-conjugating enzyme]-S-[NEDD8-protein]-yl-L-cysteine.. It functions in the pathway protein modification; protein neddylation. Its function is as follows. Accepts the ubiquitin-like protein NEDD8 from the UBA3-NAE1 E1 complex and catalyzes its covalent attachment to other proteins. The specific interaction with the E3 ubiquitin ligase RBX1, but not RBX2, suggests that the RBX1-UBE2M complex neddylates specific target proteins, such as CUL1, CUL2, CUL3 and CUL4. Involved in cell proliferation. This chain is NEDD8-conjugating enzyme Ubc12 (Ube2m), found in Mus musculus (Mouse).